An 898-amino-acid chain; its full sequence is Alanine--tRNA ligase (898 aa).

Positions 582, 586, 685, and 689 each coordinate Zn(2+).

It belongs to the class-II aminoacyl-tRNA synthetase family. Requires Zn(2+) as cofactor.

Its subcellular location is the cytoplasm. The enzyme catalyses tRNA(Ala) + L-alanine + ATP = L-alanyl-tRNA(Ala) + AMP + diphosphate. Its function is as follows. Catalyzes the attachment of alanine to tRNA(Ala) in a two-step reaction: alanine is first activated by ATP to form Ala-AMP and then transferred to the acceptor end of tRNA(Ala). Also edits incorrectly charged Ser-tRNA(Ala) and Gly-tRNA(Ala) via its editing domain. This chain is Alanine--tRNA ligase, found in Mycolicibacterium vanbaalenii (strain DSM 7251 / JCM 13017 / BCRC 16820 / KCTC 9966 / NRRL B-24157 / PYR-1) (Mycobacterium vanbaalenii).